Consider the following 474-residue polypeptide: Glutamyl-tRNA(Gln) amidotransferase subunit A (474 aa).

Catalysis depends on charge relay system residues Lys-76 and Ser-151. Ser-175 functions as the Acyl-ester intermediate in the catalytic mechanism.

The protein belongs to the amidase family. GatA subfamily. In terms of assembly, heterotrimer of A, B and C subunits.

The enzyme catalyses L-glutamyl-tRNA(Gln) + L-glutamine + ATP + H2O = L-glutaminyl-tRNA(Gln) + L-glutamate + ADP + phosphate + H(+). In terms of biological role, allows the formation of correctly charged Gln-tRNA(Gln) through the transamidation of misacylated Glu-tRNA(Gln) in organisms which lack glutaminyl-tRNA synthetase. The reaction takes place in the presence of glutamine and ATP through an activated gamma-phospho-Glu-tRNA(Gln). The protein is Glutamyl-tRNA(Gln) amidotransferase subunit A of Chlorobium limicola (strain DSM 245 / NBRC 103803 / 6330).